A 346-amino-acid chain; its full sequence is UDP-N-acetylenolpyruvoylglucosamine reductase (346 aa).

Residues 23–194 form the FAD-binding PCMH-type domain; that stretch reads FDVRAQFACR…TSVTFRLPKV (172 aa). The active site involves Arg170. Ser246 serves as the catalytic Proton donor. Glu342 is an active-site residue.

It belongs to the MurB family. FAD is required as a cofactor.

It is found in the cytoplasm. It catalyses the reaction UDP-N-acetyl-alpha-D-muramate + NADP(+) = UDP-N-acetyl-3-O-(1-carboxyvinyl)-alpha-D-glucosamine + NADPH + H(+). Its pathway is cell wall biogenesis; peptidoglycan biosynthesis. In terms of biological role, cell wall formation. This is UDP-N-acetylenolpyruvoylglucosamine reductase from Paraburkholderia phytofirmans (strain DSM 17436 / LMG 22146 / PsJN) (Burkholderia phytofirmans).